We begin with the raw amino-acid sequence, 375 residues long: D-apiose dehydrogenase (375 aa).

Residue 29–30 (FF) participates in NAD(+) binding. Mg(2+)-binding residues include Trp38, Arg39, Ile41, and Ala44. NAD(+) contacts are provided by residues Asp51, Ser93, 111–112 (QK), Asn140, and 179–181 (QPY). Lys112 provides a ligand contact to substrate. Residues Gln179, Asp192, His196, and Tyr246 each contribute to the substrate site.

The protein belongs to the Gfo/Idh/MocA family.

It catalyses the reaction D-apiofuranose + NAD(+) = D-apionolactone + NADH + H(+). It functions in the pathway carbohydrate metabolism. Involved in catabolism of D-apiose. Catalyzes oxidation of D-apiose to D-apionolactone. The chain is D-apiose dehydrogenase from Paraburkholderia graminis (strain ATCC 700544 / DSM 17151 / LMG 18924 / NCIMB 13744 / C4D1M).